The chain runs to 86 residues: MRKDIHPDYRPVVFLDTTTGYKFLSGSTKTSKETIEFEGETYPLVRVEISSDSHPFYTGRQKFTQADGRVDRFNKKYGLKDANAAK.

The protein belongs to the bacterial ribosomal protein bL31 family. Type B subfamily. In terms of assembly, part of the 50S ribosomal subunit.

The protein is Large ribosomal subunit protein bL31B of Streptococcus equi subsp. equi (strain 4047).